The sequence spans 128 residues: UPF0325 protein PMI2289 (128 aa).

It belongs to the UPF0325 family.

The chain is UPF0325 protein PMI2289 from Proteus mirabilis (strain HI4320).